The primary structure comprises 153 residues: MTHDNKLQVEAIKCGTVIDHIPAQVGFKLLSLFKLTETDQRITIGLNLPSGEMGRKDLIKIENTFLTDEQVNQLALYAPQATVNRIDNYDVVGKSRPSLPERINNVLVCPNSNCISHAEPVSSSFAVKKRANDIALKCKYCEKEFSHNVVLAN.

C109, C114, C138, and C141 together coordinate Zn(2+).

It belongs to the PyrI family. As to quaternary structure, contains catalytic and regulatory chains. It depends on Zn(2+) as a cofactor.

In terms of biological role, involved in allosteric regulation of aspartate carbamoyltransferase. The protein is Aspartate carbamoyltransferase regulatory chain of Salmonella schwarzengrund (strain CVM19633).